Reading from the N-terminus, the 187-residue chain is Hypoxanthine/guanine phosphoribosyltransferase (187 aa).

This sequence belongs to the purine/pyrimidine phosphoribosyltransferase family. Archaeal HPRT subfamily. In terms of assembly, homodimer.

It localises to the cytoplasm. It catalyses the reaction IMP + diphosphate = hypoxanthine + 5-phospho-alpha-D-ribose 1-diphosphate. The enzyme catalyses GMP + diphosphate = guanine + 5-phospho-alpha-D-ribose 1-diphosphate. Its pathway is purine metabolism; IMP biosynthesis via salvage pathway; IMP from hypoxanthine: step 1/1. In terms of biological role, catalyzes a salvage reaction resulting in the formation of IMP that is energically less costly than de novo synthesis. The polypeptide is Hypoxanthine/guanine phosphoribosyltransferase (Ferroglobus placidus (strain DSM 10642 / AEDII12DO)).